The sequence spans 123 residues: Small ribosomal subunit protein uS12 (123 aa).

3-methylthioaspartic acid is present on Asp89.

This sequence belongs to the universal ribosomal protein uS12 family. As to quaternary structure, part of the 30S ribosomal subunit. Contacts proteins S8 and S17. May interact with IF1 in the 30S initiation complex.

In terms of biological role, with S4 and S5 plays an important role in translational accuracy. Interacts with and stabilizes bases of the 16S rRNA that are involved in tRNA selection in the A site and with the mRNA backbone. Located at the interface of the 30S and 50S subunits, it traverses the body of the 30S subunit contacting proteins on the other side and probably holding the rRNA structure together. The combined cluster of proteins S8, S12 and S17 appears to hold together the shoulder and platform of the 30S subunit. This chain is Small ribosomal subunit protein uS12, found in Anaeromyxobacter dehalogenans (strain 2CP-1 / ATCC BAA-258).